A 109-amino-acid polypeptide reads, in one-letter code: uncharacterized protein (109 aa).

This sequence to M.jannaschii MJ1244 and MJ1245 and M.thermoautotrophicum MTH1110.

This is an uncharacterized protein from Methanococcus maripaludis (Methanococcus deltae).